The chain runs to 192 residues: Phosphoheptose isomerase (192 aa).

An SIS domain is found at 35–192 (LIETLENQGK…CIERHFAHKN (158 aa)). Residue 50-52 (NGG) participates in substrate binding. Residues His59 and Glu63 each coordinate Zn(2+). Substrate is bound by residues Glu63, 92 to 93 (ND), 118 to 120 (STS), Ser123, and Gln170. Gln170 and His178 together coordinate Zn(2+).

It belongs to the SIS family. GmhA subfamily. In terms of assembly, homotetramer. It depends on Zn(2+) as a cofactor.

The protein resides in the cytoplasm. The catalysed reaction is 2 D-sedoheptulose 7-phosphate = D-glycero-alpha-D-manno-heptose 7-phosphate + D-glycero-beta-D-manno-heptose 7-phosphate. The protein operates within carbohydrate biosynthesis; D-glycero-D-manno-heptose 7-phosphate biosynthesis; D-glycero-alpha-D-manno-heptose 7-phosphate and D-glycero-beta-D-manno-heptose 7-phosphate from sedoheptulose 7-phosphate: step 1/1. Functionally, catalyzes the isomerization of sedoheptulose 7-phosphate in D-glycero-D-manno-heptose 7-phosphate. The chain is Phosphoheptose isomerase from Helicobacter pylori (strain P12).